We begin with the raw amino-acid sequence, 206 residues long: Uridine kinase (206 aa).

Residue 9–16 (GGSGSGKT) participates in ATP binding.

It belongs to the uridine kinase family.

Its subcellular location is the cytoplasm. The enzyme catalyses uridine + ATP = UMP + ADP + H(+). It catalyses the reaction cytidine + ATP = CMP + ADP + H(+). Its pathway is pyrimidine metabolism; CTP biosynthesis via salvage pathway; CTP from cytidine: step 1/3. It participates in pyrimidine metabolism; UMP biosynthesis via salvage pathway; UMP from uridine: step 1/1. The sequence is that of Uridine kinase from Borrelia turicatae (strain 91E135).